Reading from the N-terminus, the 314-residue chain is Putative S-adenosyl-L-methionine-dependent methyltransferase MMAR_5323 (314 aa).

S-adenosyl-L-methionine is bound by residues Asp-132 and 161-162; that span reads DL.

Belongs to the UPF0677 family.

In terms of biological role, exhibits S-adenosyl-L-methionine-dependent methyltransferase activity. The chain is Putative S-adenosyl-L-methionine-dependent methyltransferase MMAR_5323 from Mycobacterium marinum (strain ATCC BAA-535 / M).